A 344-amino-acid polypeptide reads, in one-letter code: UDP-N-acetylglucosamine--N-acetylmuramyl-(pentapeptide) pyrophosphoryl-undecaprenol N-acetylglucosamine transferase (344 aa).

UDP-N-acetyl-alpha-D-glucosamine is bound by residues 9–11, N118, R157, S188, and Q282; that span reads TGG.

This sequence belongs to the glycosyltransferase 28 family. MurG subfamily.

It is found in the cell inner membrane. It carries out the reaction di-trans,octa-cis-undecaprenyl diphospho-N-acetyl-alpha-D-muramoyl-L-alanyl-D-glutamyl-meso-2,6-diaminopimeloyl-D-alanyl-D-alanine + UDP-N-acetyl-alpha-D-glucosamine = di-trans,octa-cis-undecaprenyl diphospho-[N-acetyl-alpha-D-glucosaminyl-(1-&gt;4)]-N-acetyl-alpha-D-muramoyl-L-alanyl-D-glutamyl-meso-2,6-diaminopimeloyl-D-alanyl-D-alanine + UDP + H(+). Its pathway is cell wall biogenesis; peptidoglycan biosynthesis. In terms of biological role, cell wall formation. Catalyzes the transfer of a GlcNAc subunit on undecaprenyl-pyrophosphoryl-MurNAc-pentapeptide (lipid intermediate I) to form undecaprenyl-pyrophosphoryl-MurNAc-(pentapeptide)GlcNAc (lipid intermediate II). In Aquifex aeolicus (strain VF5), this protein is UDP-N-acetylglucosamine--N-acetylmuramyl-(pentapeptide) pyrophosphoryl-undecaprenol N-acetylglucosamine transferase.